Consider the following 228-residue polypeptide: UPF0758 protein CTC_02075 (228 aa).

The 123-residue stretch at 106–228 (NITNPKDAAY…YISLKEKDIL (123 aa)) folds into the MPN domain. Histidine 177, histidine 179, and aspartate 190 together coordinate Zn(2+). Residues 177–190 (HNHPSGDTTPSKED) carry the JAMM motif motif.

This sequence belongs to the UPF0758 family.

This is UPF0758 protein CTC_02075 from Clostridium tetani (strain Massachusetts / E88).